We begin with the raw amino-acid sequence, 61 residues long: Small ribosomal subunit protein uS14 (61 aa).

4 residues coordinate Zn(2+): Cys24, Cys27, Cys40, and Cys43.

The protein belongs to the universal ribosomal protein uS14 family. Zinc-binding uS14 subfamily. Part of the 30S ribosomal subunit. Contacts proteins S3 and S10. Zn(2+) is required as a cofactor.

Its function is as follows. Binds 16S rRNA, required for the assembly of 30S particles and may also be responsible for determining the conformation of the 16S rRNA at the A site. This chain is Small ribosomal subunit protein uS14, found in Caldanaerobacter subterraneus subsp. tengcongensis (strain DSM 15242 / JCM 11007 / NBRC 100824 / MB4) (Thermoanaerobacter tengcongensis).